The sequence spans 1103 residues: PALM2-AKAP2 fusion protein (1103 aa).

2 disordered regions span residues 178 to 197 and 304 to 396; these read ESAS…KKPP and YNGT…SSRD. Polar residues predominate over residues 179-189; that stretch reads SASNATETSGP. Residues S322, S352, and S383 each carry the phosphoserine modification. The segment covering 380–392 has biased composition (low complexity); it reads VPVSPSSTTSSRC. Residue K405 forms a Glycyl lysine isopeptide (Lys-Gly) (interchain with G-Cter in SUMO1); alternate linkage. A Glycyl lysine isopeptide (Lys-Gly) (interchain with G-Cter in SUMO2); alternate cross-link involves residue K405. Positions 444–521 form a coiled coil; sequence EEMLELEKER…QKQLQQQQQQ (78 aa). Disordered stretches follow at residues 483–544 and 566–662; these read EQLD…DKAK and NSRQ…SKLW. Residues 490 to 505 are compositionally biased toward basic and acidic residues; the sequence is LESHKKYKERKERRAQ. Positions 506–521 are enriched in low complexity; it reads QEQLLLQKQLQQQQQQ. The span at 522–531 shows a compositional bias: polar residues; that stretch reads PPSQLCTAPA. The span at 533–544 shows a compositional bias: basic and acidic residues; that stretch reads SHERASMIDKAK. Over residues 566-579 the composition is skewed to polar residues; sequence NSRQAVAKGQSTPR. Phosphoserine occurs at positions 567 and 624. Residues 633-643 show a composition bias toward polar residues; it reads AAGSQGNTASQ. 3 positions are modified to phosphoserine: S692, S696, and S748. Positions 745–763 are enriched in polar residues; the sequence is QENSLADFSLPQTPQTDNP. Residues 745–794 are disordered; it reads QENSLADFSLPQTPQTDNPSEGRGEGVSKSFSDHGFYSPSSTLGDSPLVD. T757 is modified (phosphothreonine). Positions 797–810 are PKA-RII subunit binding domain; that stretch reads LEYQAGLLVQNAIQ. Basic and acidic residues predominate over residues 817–829; the sequence is VDKAVSKTSRDGA. The tract at residues 817–907 is disordered; it reads VDKAVSKTSR…GPINMEETRP (91 aa). The residue at position 862 (S862) is a Phosphoserine. Positions 865–886 are enriched in basic and acidic residues; that stretch reads QEKRDVLPKILPAEDRALRERG. The stretch at 941–979 forms a coiled coil; sequence KLRSRKQRTLSMIEEEIRAAQEREEELKRQRQVLQSTQS. Phosphoserine is present on residues S951, S979, S1009, and S1016. The segment at 962-1035 is disordered; the sequence is EREEELKRQR…AAGTQRPKNL (74 aa). A compositionally biased stretch (polar residues) spans 976-990; that stretch reads STQSPRTKNAPSLPS.

As to expression, expressed in infantile heart and muscle, and fibroblasts.

The protein localises to the apical cell membrane. Functionally, binds to regulatory subunit (RII) of protein kinase A. May be involved in establishing polarity in signaling systems or in integrating PKA-RII isoforms with downstream effectors to capture, amplify and focus diffuse, trans-cellular signals carried by cAMP. Binds to and modulates the structure of the actin cytoskeleton. The protein is PALM2-AKAP2 fusion protein of Homo sapiens (Human).